A 198-amino-acid polypeptide reads, in one-letter code: MENVQRLDCPVCGGKGTFVITSHQIDIPYFGPVLETTMICEKCNFRRSDVFPLEVREPKKYILKIESERDLNKRVVRSSSAYIQIPELGVEIKPGPLAEGFVSNVEGVLNRVDNILQTLIRWAETEEQKKKAEELRERIKKLKEGKEEATLILIDPLGHSAIIGEGVEEEILSEEEVEKLKEGIVIMDLDKDKEKEKE.

The segment at 9 to 43 adopts a C4-type zinc-finger fold; that stretch reads CPVCGGKGTFVITSHQIDIPYFGPVLETTMICEKC.

The protein belongs to the ZPR1 family.

This is an uncharacterized protein from Methanocaldococcus jannaschii (strain ATCC 43067 / DSM 2661 / JAL-1 / JCM 10045 / NBRC 100440) (Methanococcus jannaschii).